A 410-amino-acid polypeptide reads, in one-letter code: MSAAQGWDRNRRRGGGAAGGASGVSGAGAAGGGRGTGQLNRFVQLSGRPHLPGHRPPPARSGHRCVADNTNLYVFGGYNPDYDESGGPDNEDYPLFRELWRYHFATGVWHQMGTDGYMPRELASMSLVLHGNNLLVFGGTGIPFGESNGNDVHVCNVKYKRWALLSCRGKRPSRIYGQAMALINGSLYVFGGTTGYIYSTDLHKLDLNTMVWTQLKPNNLSCDLPEERYRHEIAHDGQRIYILGGGTSWTAYSLNKIHAYNLETNAWEEIATKPHEKIGFPAARRCHSCVQIKNDVFICGGYNGEVILGDIWKLNLQTFQWVKLPATMPEPVYFHCAAVTPAGCMYIHGGVVNIHENKRTGSLFKIWLVVPSLLELAWEKLLAAFPNLANLSRTQLLHLGLTQELIERLK.

The tract at residues 1–40 (MSAAQGWDRNRRRGGGAAGGASGVSGAGAAGGGRGTGQLN) is disordered. Residue Arg13 is modified to Omega-N-methylarginine. The segment covering 15 to 36 (GGAAGGASGVSGAGAAGGGRGT) has biased composition (gly residues). 6 Kelch repeats span residues 87-154 (GPDN…DVHV), 155-198 (CNVK…GYIY), 199-260 (STDL…IHAY), 261-319 (NLET…LQTF), 320-364 (QWVK…GSLF), and 365-403 (KIWLVVPSLLELAWEKLLAAFPNLANLSRTQLLHLGLTQ). Residues 369–410 (VVPSLLELAWEKLLAAFPNLANLSRTQLLHLGLTQELIERLK) form an interaction with CUL2 region.

It belongs to the KLHDC10 family. As to quaternary structure, component of a CRL2 E3 ubiquitin-protein ligase complex, also named ECS (Elongin BC-CUL2/5-SOCS-box protein) complex, composed of CUL2, Elongin BC (ELOB and ELOC), RBX1 and substrate-specific adapter KLHDC10. Interacts (via the 6 Kelch repeats) with PPP5C.

It localises to the nucleus. The protein localises to the cytoplasm. It functions in the pathway protein modification; protein ubiquitination. Functionally, substrate-recognition component of a Cul2-RING (CRL2) E3 ubiquitin-protein ligase complex of the DesCEND (destruction via C-end degrons) pathway, which recognizes a C-degron located at the extreme C-terminus of target proteins, leading to their ubiquitination and degradation. The C-degron recognized by the DesCEND pathway is usually a motif of less than ten residues and can be present in full-length proteins, truncated proteins or proteolytically cleaved forms. The CRL2(KLHDC10) complex specifically recognizes proteins with a proline-glycine (Pro-Gly) or an alanine tail (CAT tail) at the C-terminus, leading to their ubiquitination and degradation. The CRL2(KLHDC10) complex is involved in the ribosome-associated quality control (RQC) pathway, which mediates the extraction of incompletely synthesized nascent chains from stalled ribosomes: CRL2(KLHDC10) acts downstream of NEMF and recognizes CAT tails associated with stalled nascent chains, leading to their ubiquitination and degradation. Participates in the oxidative stress-induced cell death through MAP3K5 activation. Inhibits PPP5C phosphatase activity on MAP3K5. Acts as a regulator of necroptosis. This Rattus norvegicus (Rat) protein is Kelch domain-containing protein 10.